The sequence spans 378 residues: 4-hydroxy-3-methylbut-2-en-1-yl diphosphate synthase (flavodoxin) (378 aa).

4 residues coordinate [4Fe-4S] cluster: Cys-268, Cys-271, Cys-303, and Glu-310. The tract at residues 359–378 (AEREKEKEKEKEKEKETQEQ) is disordered.

Belongs to the IspG family. Requires [4Fe-4S] cluster as cofactor.

The catalysed reaction is (2E)-4-hydroxy-3-methylbut-2-enyl diphosphate + oxidized [flavodoxin] + H2O + 2 H(+) = 2-C-methyl-D-erythritol 2,4-cyclic diphosphate + reduced [flavodoxin]. It functions in the pathway isoprenoid biosynthesis; isopentenyl diphosphate biosynthesis via DXP pathway; isopentenyl diphosphate from 1-deoxy-D-xylulose 5-phosphate: step 5/6. Its function is as follows. Converts 2C-methyl-D-erythritol 2,4-cyclodiphosphate (ME-2,4cPP) into 1-hydroxy-2-methyl-2-(E)-butenyl 4-diphosphate. The protein is 4-hydroxy-3-methylbut-2-en-1-yl diphosphate synthase (flavodoxin) of Bacillus cereus (strain ZK / E33L).